The following is a 395-amino-acid chain: Elongation factor Tu (395 aa).

The 195-residue stretch at 10–204 (KPHVNIGTIG…AVDEYIPTPQ (195 aa)) folds into the tr-type G domain. Residues 19 to 26 (GHVDHGKT) form a G1 region. GTP is bound at residue 19-26 (GHVDHGKT). Threonine 26 is a binding site for Mg(2+). A G2 region spans residues 60–64 (GITIS). The segment at 81-84 (DCPG) is G3. GTP contacts are provided by residues 81 to 85 (DCPGH) and 136 to 139 (NKCD). The tract at residues 136 to 139 (NKCD) is G4. Residues 174–176 (SAL) are G5.

This sequence belongs to the TRAFAC class translation factor GTPase superfamily. Classic translation factor GTPase family. EF-Tu/EF-1A subfamily. As to quaternary structure, monomer.

It is found in the cytoplasm. The catalysed reaction is GTP + H2O = GDP + phosphate + H(+). In terms of biological role, GTP hydrolase that promotes the GTP-dependent binding of aminoacyl-tRNA to the A-site of ribosomes during protein biosynthesis. The sequence is that of Elongation factor Tu from Geobacillus stearothermophilus (Bacillus stearothermophilus).